Consider the following 171-residue polypeptide: Tetratricopeptide repeat protein 9C (171 aa).

3 TPR repeats span residues 8–41, 72–107, and 108–141; these read AQLYKEEGNQRYREGKYRDAVSRYHRALLQLRGL, TDCYNNLAACLLQMEPVNYERVREYSQKVLERQPDN, and AKALYRAGVAFFHLQDYDQARHYLLAAVNRQPKD.

Belongs to the TTC9 family.

The sequence is that of Tetratricopeptide repeat protein 9C (TTC9C) from Homo sapiens (Human).